A 326-amino-acid polypeptide reads, in one-letter code: MDIKLGKYKPTKEEYIKSFKDMLLLRRFEEKCGQLYGMGEIGGFCHLYIGQEAVISAIDMVKQKGDSTITSYRDHAHIILAGTEPKYVLAELMGRATGCSKGKGGSMHLFNVPNKFYGGHGIVGAQVPIGTGLAFVEKYNDTHNICFTFLGDGAVNQGQVYEAFNMAALWGLPVVYIIENNEYSMGTSVARSTFMRDLYKKGASFGIKGFQLDGMDFEEMYDGSKQAAEYVRENSFPLILEVKTYRYRGHSMSDPAKYRSKEEVEQYKERDPLVIIRKTILDNKYVTEADLKAIEQSVKEIVKEAVEFSENSPLPDEGELYTQVYC.

As to quaternary structure, heterodimer of an alpha and a beta chain. It depends on thiamine diphosphate as a cofactor.

It carries out the reaction N(6)-[(R)-lipoyl]-L-lysyl-[protein] + pyruvate + H(+) = N(6)-[(R)-S(8)-acetyldihydrolipoyl]-L-lysyl-[protein] + CO2. Its function is as follows. The pyruvate dehydrogenase complex catalyzes the overall conversion of pyruvate to acetyl-CoA and CO(2). It contains multiple copies of three enzymatic components: pyruvate dehydrogenase (E1), dihydrolipoamide acetyltransferase (E2) and lipoamide dehydrogenase (E3). The protein is Pyruvate dehydrogenase E1 component subunit alpha (pdhA) of Rickettsia conorii (strain ATCC VR-613 / Malish 7).